We begin with the raw amino-acid sequence, 179 residues long: Acireductone dioxygenase (179 aa).

Positions 97, 99, 103, and 141 each coordinate Fe(2+). Ni(2+)-binding residues include histidine 97, histidine 99, glutamate 103, and histidine 141.

This sequence belongs to the acireductone dioxygenase (ARD) family. Monomer. Requires Fe(2+) as cofactor. It depends on Ni(2+) as a cofactor.

It carries out the reaction 1,2-dihydroxy-5-(methylsulfanyl)pent-1-en-3-one + O2 = 3-(methylsulfanyl)propanoate + CO + formate + 2 H(+). The enzyme catalyses 1,2-dihydroxy-5-(methylsulfanyl)pent-1-en-3-one + O2 = 4-methylsulfanyl-2-oxobutanoate + formate + 2 H(+). It functions in the pathway amino-acid biosynthesis; L-methionine biosynthesis via salvage pathway; L-methionine from S-methyl-5-thio-alpha-D-ribose 1-phosphate: step 5/6. Catalyzes 2 different reactions between oxygen and the acireductone 1,2-dihydroxy-3-keto-5-methylthiopentene (DHK-MTPene) depending upon the metal bound in the active site. Fe-containing acireductone dioxygenase (Fe-ARD) produces formate and 2-keto-4-methylthiobutyrate (KMTB), the alpha-ketoacid precursor of methionine in the methionine recycle pathway. Ni-containing acireductone dioxygenase (Ni-ARD) produces methylthiopropionate, carbon monoxide and formate, and does not lie on the methionine recycle pathway. The protein is Acireductone dioxygenase of Granulibacter bethesdensis (strain ATCC BAA-1260 / CGDNIH1).